The primary structure comprises 34 residues: Protamine-Z1/Z2 (34 aa).

The disordered stretch occupies residues 1 to 34 (PRRRRRSSRPVRRRRRYRRSTAARRRRRVVRRRR).

In terms of tissue distribution, testis.

It is found in the nucleus. It localises to the chromosome. Functionally, protamines substitute for histones in the chromatin of sperm during the haploid phase of spermatogenesis. They compact sperm DNA into a highly condensed, stable and inactive complex. In Sarda orientalis (Striped bonito), this protein is Protamine-Z1/Z2.